A 126-amino-acid chain; its full sequence is Holo-[acyl-carrier-protein] synthase (126 aa).

Residues aspartate 9 and glutamate 58 each contribute to the Mg(2+) site.

The protein belongs to the P-Pant transferase superfamily. AcpS family. The cofactor is Mg(2+).

It localises to the cytoplasm. It carries out the reaction apo-[ACP] + CoA = holo-[ACP] + adenosine 3',5'-bisphosphate + H(+). Functionally, transfers the 4'-phosphopantetheine moiety from coenzyme A to a Ser of acyl-carrier-protein. The sequence is that of Holo-[acyl-carrier-protein] synthase from Photobacterium profundum (strain SS9).